The sequence spans 182 residues: Ribosome maturation factor RimM (182 aa).

The region spanning 103–182 (VGDYYWKDLI…TIEVDWDPGF (80 aa)) is the PRC barrel domain.

The protein belongs to the RimM family. Binds ribosomal protein uS19.

Its subcellular location is the cytoplasm. In terms of biological role, an accessory protein needed during the final step in the assembly of 30S ribosomal subunit, possibly for assembly of the head region. Essential for efficient processing of 16S rRNA. May be needed both before and after RbfA during the maturation of 16S rRNA. It has affinity for free ribosomal 30S subunits but not for 70S ribosomes. In Pectobacterium atrosepticum (strain SCRI 1043 / ATCC BAA-672) (Erwinia carotovora subsp. atroseptica), this protein is Ribosome maturation factor RimM.